The sequence spans 391 residues: Isochorismate synthase EntC (391 aa).

Threonine 140, threonine 142, valine 145, and aspartate 146 together coordinate Mg(2+). The active-site Proton acceptor is lysine 147. Catalysis depends on glutamate 197, which acts as the Proton donor. Positions 214, 215, 241, 303, 347, and 361 each coordinate isochorismate. Position 241 (glutamate 241) interacts with Mg(2+). Glutamate 376 contributes to the Mg(2+) binding site. Lysine 380 is an isochorismate binding site.

The protein belongs to the isochorismate synthase family. As to quaternary structure, monomer. Forms a specific pairwise interaction with EntB; this interaction likely facilitates substrate channeling to connect the EntB and EntC active sites. It depends on Mg(2+) as a cofactor.

The enzyme catalyses chorismate = isochorismate. The protein operates within siderophore biosynthesis; enterobactin biosynthesis. Functionally, involved in the biosynthesis of the siderophore enterobactin (macrocyclic trimeric lactone of N-(2,3-dihydroxybenzoyl)-serine). Catalyzes the reversible conversion of chorismate to isochorismate. The protein is Isochorismate synthase EntC of Escherichia coli O157:H7.